We begin with the raw amino-acid sequence, 205 residues long: Large ribosomal subunit protein bL17c (205 aa).

The N-terminal 89 residues, 1-89 (MASASTTWSM…VIDNGGRVFA (89 aa)), are a transit peptide targeting the chloroplast.

Belongs to the bacterial ribosomal protein bL17 family. As to quaternary structure, part of the 50S ribosomal subunit.

It is found in the plastid. It localises to the chloroplast. Its function is as follows. This protein binds directly to 23S ribosomal RNA. This Nicotiana tabacum (Common tobacco) protein is Large ribosomal subunit protein bL17c (RPL17).